We begin with the raw amino-acid sequence, 107 residues long: Integration host factor subunit beta (107 aa).

The disordered stretch occupies residues 76–107; it reads FVPHFKPGKELRERVDGRAGEPLKADDPDDER. Positions 82-101 are enriched in basic and acidic residues; that stretch reads PGKELRERVDGRAGEPLKAD.

It belongs to the bacterial histone-like protein family. Heterodimer of an alpha and a beta chain.

Functionally, this protein is one of the two subunits of integration host factor, a specific DNA-binding protein that functions in genetic recombination as well as in transcriptional and translational control. This Burkholderia cenocepacia (strain ATCC BAA-245 / DSM 16553 / LMG 16656 / NCTC 13227 / J2315 / CF5610) (Burkholderia cepacia (strain J2315)) protein is Integration host factor subunit beta.